The chain runs to 1763 residues: Collagen alpha-2(IV) chain (1763 aa).

Residues 1-26 (MSSRLRIPLWLLLPTTALVYFVTTVS) form the signal peptide. The interval 27-42 (TQITCRDCTNRGCFCV) is 7S domain. The segment at 43-1529 (GEKGSMGIPG…SGPPGPPGPS (1487 aa)) is triple-helical region. 2 disordered regions span residues 51–529 (PGPQ…PGPK) and 550–1529 (AGYA…PGPS). Over residues 72–81 (PGPKGQKGSQ) the composition is skewed to low complexity. A glycan (N-linked (GlcNAc...) asparagine) is linked at Asn126. The segment covering 135–152 (PGLPGPPGMPGFPGPPGV) has biased composition (pro residues). Over residues 190-199 (FPGEKGDRGD) the composition is skewed to basic and acidic residues. Residues 206-217 (RGPPGEAGPPGN) are compositionally biased toward pro residues. The segment covering 225–235 (PKGDPGEQGPR) has biased composition (low complexity). O-linked (Xyl...) (glycosaminoglycan) serine glycosylation occurs at Ala249. The segment covering 326 to 335 (DGLPGVPGLP) has biased composition (low complexity). The span at 400–409 (GLPGGPGLPG) shows a compositional bias: gly residues. Low complexity-rich tracts occupy residues 410–419 (LPGLEGLPGP) and 428–453 (IPGA…PGPR). Residues 466–481 (KDGRPGLDGLPGRKGE) are compositionally biased toward basic and acidic residues. Positions 564–582 (LPGIPGATGAPGDDGLPGA) are enriched in low complexity. Pro residues predominate over residues 583–592 (PGRPGPPGPP). Composition is skewed to low complexity over residues 699–714 (DAGL…AVGP) and 731–783 (KDGL…PGIP). Residues 810–832 (PGLPGPKGEPGPSTTGPPGPPGF) are compositionally biased toward pro residues. 10 stretches are compositionally biased toward low complexity: residues 865-895 (EIGL…KEGP), 946-977 (FPGQ…PGQK), 1040-1051 (PGLPGQPGLRGP), 1077-1086 (LMGEKGLPGL), 1108-1146 (PGLK…QPGL), 1210-1231 (PGFP…PGPR), 1280-1296 (LPGL…PGLK), 1367-1386 (PAGL…PGFP), 1462-1480 (LPGL…FAGA), and 1499-1510 (PGLPGFPGIEGI). A compositionally biased stretch (pro residues) spans 1511 to 1528 (PGPPGLPGPSGPPGPPGP). The region spanning 1533 to 1756 (GFLLVKHSQT…SRCQVCIRSP (224 aa)) is the Collagen IV NC1 domain. Disulfide bonds link Cys1548/Cys1637, Cys1581/Cys1634, Cys1593/Cys1599, Cys1656/Cys1752, Cys1690/Cys1749, and Cys1702/Cys1709.

This sequence belongs to the type IV collagen family. As to quaternary structure, trimers of two alpha 1(IV) and one alpha 2(IV) chain. Type IV collagen forms a mesh-like network linked through intermolecular interactions between 7S domains and between NC1 domains. In terms of processing, prolines at the third position of the tripeptide repeating unit (G-X-Y) are hydroxylated in some or all of the chains. Post-translationally, type IV collagens contain numerous cysteine residues which are involved in inter- and intramolecular disulfide bonding. 12 of these, located in the NC1 domain, are conserved in all known type IV collagens. The trimeric structure of the NC1 domains is stabilized by covalent bonds between Lys and Met residues.

It is found in the secreted. Its subcellular location is the extracellular space. It localises to the extracellular matrix. The protein resides in the basement membrane. Functionally, collagen type IV is specific for basement membranes. The polypeptide is Collagen alpha-2(IV) chain (Ascaris suum (Pig roundworm)).